A 188-amino-acid polypeptide reads, in one-letter code: Killer cell lectin-like receptor subfamily G member 1 (188 aa).

Residues Met1–Pro33 are Cytoplasmic-facing. The short motif at Ser5–Leu10 is the ITIM motif element. Residues His34 to Tyr56 form a helical; Signal-anchor for type II membrane protein membrane-spanning segment. Topologically, residues Gln57–Tyr188 are extracellular. A disulfide bridge links Cys75 with Cys86. Residues Asn82 and Asn97 are each glycosylated (N-linked (GlcNAc...) asparagine). Residues Asn82–Lys184 enclose the C-type lectin domain. Intrachain disulfides connect Cys103/Cys183 and Cys162/Cys175.

Forms a monomer and homodimer; disulfide-linked. Interacts (via ITIM motif) with PTPN11 and INPP5D. Phosphorylated in response to monoclonal antibody G63 binding and antigenic stimulation. As to expression, expressed specifically on natural killer (NK) cells and activated CD8 T-cells. Not detected in spleen, thymus, lymph node, testis, brain or kidney. Not detected on mast cell lines, bone marrow-derived mast cells, or peritoneal mast cells.

It is found in the cell membrane. Plays an inhibitory role on natural killer (NK) cells and T-cell functions upon binding to their non-MHC ligands. May mediate missing self recognition by binding to a highly conserved site on classical cadherins, enabling it to monitor expression of E-cadherin/CDH1, N-cadherin/CDH2 and R-cadherin/CDH4 on target cells. This chain is Killer cell lectin-like receptor subfamily G member 1 (Klrg1), found in Mus musculus (Mouse).